The chain runs to 274 residues: Diaminopimelate epimerase (274 aa).

Residues asparagine 11, glutamine 44, and asparagine 64 each coordinate substrate. The Proton donor role is filled by cysteine 73. Substrate-binding positions include glycine 74 to asparagine 75, asparagine 157, asparagine 190, and glutamate 208 to arginine 209. The active-site Proton acceptor is cysteine 217. Glycine 218–serine 219 serves as a coordination point for substrate.

Belongs to the diaminopimelate epimerase family. Homodimer.

The protein resides in the cytoplasm. The enzyme catalyses (2S,6S)-2,6-diaminopimelate = meso-2,6-diaminopimelate. It participates in amino-acid biosynthesis; L-lysine biosynthesis via DAP pathway; DL-2,6-diaminopimelate from LL-2,6-diaminopimelate: step 1/1. Catalyzes the stereoinversion of LL-2,6-diaminopimelate (L,L-DAP) to meso-diaminopimelate (meso-DAP), a precursor of L-lysine and an essential component of the bacterial peptidoglycan. The sequence is that of Diaminopimelate epimerase from Pectobacterium atrosepticum (strain SCRI 1043 / ATCC BAA-672) (Erwinia carotovora subsp. atroseptica).